A 308-amino-acid polypeptide reads, in one-letter code: Oligopeptide transport ATP-binding protein OppF (308 aa).

The ABC transporter domain occupies 9 to 254; it reads VEVKNVSLTF…PIHPYTQSLL (246 aa). 46 to 53 is a binding site for ATP; the sequence is GESGSGKT.

The protein belongs to the ABC transporter superfamily. The complex is composed of two ATP-binding proteins (OppD and OppF), two transmembrane proteins (OppB and OppC) and a solute-binding protein (OppA).

The protein resides in the cell membrane. It carries out the reaction a [peptide](out) + ATP + H2O = a [peptide](in) + ADP + phosphate + H(+). Part of the ABC transporter complex OppABCDF involved in the uptake of oligopeptides. Probably responsible for energy coupling to the transport system. In Streptococcus mutans serotype c (strain ATCC 700610 / UA159), this protein is Oligopeptide transport ATP-binding protein OppF (oppF).